The sequence spans 874 residues: MKTTAEIRQSFLDFFHSKGHQVVESSSLVPENDPTLLFTNAGMNQFKDVFLGMDKRPYSRATTAQRCVRAGGKHNDLENVGYTARHHTFFEMLGNFSFGDYFKQDAINFAWEYLTSPQWLGLPKEKLWVTVYETDDEAYNIWNKDVGVPAERIIRIGDNKGSPYASDNFWAMGDTGPCGPCTEIFYDHGDHIWGGPPGSPEEDGDRYIEIWNVVFMQFNRLADGTMEKLPRPSVDTGMGLERISAVLQHVNSNYEIDIFKTLIAKTAEIVGATDLTNKSLRVIADHIRSCAYLIADGVIPSNEGRGYVLRRIIRRAVRHGHLLGAKESFFYKLVPTLIEVMAEAGKDVKAKQTNVEKLLRLEEEQFARTLERGLSLLDEALSQVKDGILSGEVAFKLYDTYGFPLDLTADVCRERNITIDEQAFDREMEAQRTRAQAASQFGVDYNSVIRVDGETKFEGYTEVESQAKITALFYDGKSVESIEVGQSAVVILENTPFYAESGGQIGDSGYLSTQGVTFNVKDTQKYGQVFGHIGELTQGSLKVGQSVNAIVDAKRRHNTSLNHSATHLLHAALRQILGLHVVQKGSLVSDKALRFDFAQPEAITKEQLSEIETLVNQKIRANFPVQTDIMDIDSAKAKGAMALFGEKYGDKVRVLTMGDFSIELCGGIHAKRTGDIGLFKIITENAVAAGIRRIEAVTGQNAIDWLHNQQRILTQSADLLKSDVNTLVEKIQQLQDKTKKVEKELQGLKEKAAMQAGSDFVKSAVKINGVSVIAQQLDGIETKSLRVMVDDLKNQLGSGVIAFASILDEKVNLVVGVTNDLTAKIKAGELVNLMAQQVGGKGGGRPDMAMAGGSQPENVAQAIKVAQDWLNKNL.

Zn(2+) is bound by residues His563, His567, Cys665, and His669.

Belongs to the class-II aminoacyl-tRNA synthetase family. Zn(2+) serves as cofactor.

The protein localises to the cytoplasm. It carries out the reaction tRNA(Ala) + L-alanine + ATP = L-alanyl-tRNA(Ala) + AMP + diphosphate. In terms of biological role, catalyzes the attachment of alanine to tRNA(Ala) in a two-step reaction: alanine is first activated by ATP to form Ala-AMP and then transferred to the acceptor end of tRNA(Ala). Also edits incorrectly charged Ser-tRNA(Ala) and Gly-tRNA(Ala) via its editing domain. The chain is Alanine--tRNA ligase from Haemophilus influenzae (strain 86-028NP).